Consider the following 267-residue polypeptide: MSNKVHLGHTARKRFGQNFLTDENVINRIVGAISPDNDHVMVEIGPGLAALTEPVASGIDKLIVVELDKDLVERLKEHPVLKDKLEIHQGDALKFDFNQLVREDKQMKVFGNLPYNISTPLMFHLFEFAQHIENMHFMLQKEVVLRLSASPGTKAYGRLTVMAQYHCQVMPVLEVPPGCFTPPPKVDSAVVRLVPYKVKPWPCKDVDLLRNLTTTAFNMRRKTLRNNLKQLLSDEDFAVLGIDATLRPEQISVEQYVAMANHVFDRK.

S-adenosyl-L-methionine contacts are provided by N18, L20, G45, E66, D91, and N112.

Belongs to the class I-like SAM-binding methyltransferase superfamily. rRNA adenine N(6)-methyltransferase family. RsmA subfamily.

Its subcellular location is the cytoplasm. It catalyses the reaction adenosine(1518)/adenosine(1519) in 16S rRNA + 4 S-adenosyl-L-methionine = N(6)-dimethyladenosine(1518)/N(6)-dimethyladenosine(1519) in 16S rRNA + 4 S-adenosyl-L-homocysteine + 4 H(+). In terms of biological role, specifically dimethylates two adjacent adenosines (A1518 and A1519) in the loop of a conserved hairpin near the 3'-end of 16S rRNA in the 30S particle. May play a critical role in biogenesis of 30S subunits. The protein is Ribosomal RNA small subunit methyltransferase A of Shewanella pealeana (strain ATCC 700345 / ANG-SQ1).